A 197-amino-acid chain; its full sequence is MARKKQVGRRLEGWKAKKWYRVYVPDAFGKAEIGDAISADPENMVGRIMTATLGEVVQDYSKSHIKMRFKINNVAGDAAYTEFVGHEVTRDYLRSMVKRRASRIDTIHPVVSKDKKLLRVTVVCLTLSRADQSQVHAVRQAISQALSARAAESDFETLVKDIVSGDMARDIFKAVKTIYPIRRVEITKSKLEQVAAV.

Belongs to the eukaryotic ribosomal protein eS1 family.

The chain is Small ribosomal subunit protein eS1 from Methanoculleus marisnigri (strain ATCC 35101 / DSM 1498 / JR1).